The following is a 335-amino-acid chain: MQQTYKPNTSALKDGAPKATVDQKQLLPCKYRVGRVLGGGTYATVREAVHIETNKMYAAKIMNKKMMEKKQDFVKNEIAILKRVSYEHPNILHLVDFFETVNNLYLITELATGGELFDRICAKGSFYEADAAALMRTTTSAVKYLHDNGIVHRDLKPENLLYRSKDPNSDLLIADFGLSHFYEDSQYYMLMTACGTPEYMAPEVFRRTGYGKPVDMWAIGVITYFLLSGYTPFARPSQVEVIEAILANEYTFNDPCWSGISETAKDFIKKCLENDPSKRLTAADALKHPFLSEKRPATSNLLPNVRENFNARKTFRTAYNAVRAFNTWKKLENKH.

Residues 31–291 form the Protein kinase domain; that stretch reads YRVGRVLGGG…AADALKHPFL (261 aa). 37–45 is a binding site for ATP; it reads LGGGTYATV. Residue Asp-154 is the Proton acceptor of the active site. Position 192 is a phosphothreonine; by autocatalysis (Thr-192). A calmodulin-binding region spans residues 310-334; sequence NARKTFRTAYNAVRAFNTWKKLENK.

This sequence belongs to the protein kinase superfamily. CAMK Ser/Thr protein kinase family. CaMK subfamily.

Its subcellular location is the cytoplasm. The catalysed reaction is L-seryl-[protein] + ATP = O-phospho-L-seryl-[protein] + ADP + H(+). The enzyme catalyses L-threonyl-[protein] + ATP = O-phospho-L-threonyl-[protein] + ADP + H(+). Important in cell cycle regulation. The protein is Calcium/calmodulin-dependent protein kinase type I (cmk1) of Schizosaccharomyces pombe (strain 972 / ATCC 24843) (Fission yeast).